A 136-amino-acid chain; its full sequence is NADPH-dependent 7-cyano-7-deazaguanine reductase (136 aa).

The active-site Thioimide intermediate is the Cys-50. Asp-57 functions as the Proton donor in the catalytic mechanism. Substrate-binding positions include 72–74 (YEL) and 91–92 (HE).

Belongs to the GTP cyclohydrolase I family. QueF type 1 subfamily.

It localises to the cytoplasm. It carries out the reaction 7-aminomethyl-7-carbaguanine + 2 NADP(+) = 7-cyano-7-deazaguanine + 2 NADPH + 3 H(+). The protein operates within tRNA modification; tRNA-queuosine biosynthesis. Its function is as follows. Catalyzes the NADPH-dependent reduction of 7-cyano-7-deazaguanine (preQ0) to 7-aminomethyl-7-deazaguanine (preQ1). This chain is NADPH-dependent 7-cyano-7-deazaguanine reductase, found in Prochlorococcus marinus (strain MIT 9515).